Consider the following 158-residue polypeptide: Protein-export protein SecB (158 aa).

This sequence belongs to the SecB family. As to quaternary structure, homotetramer, a dimer of dimers. One homotetramer interacts with 1 SecA dimer.

The protein localises to the cytoplasm. In terms of biological role, one of the proteins required for the normal export of preproteins out of the cell cytoplasm. It is a molecular chaperone that binds to a subset of precursor proteins, maintaining them in a translocation-competent state. It also specifically binds to its receptor SecA. In Pectobacterium atrosepticum (strain SCRI 1043 / ATCC BAA-672) (Erwinia carotovora subsp. atroseptica), this protein is Protein-export protein SecB.